The sequence spans 141 residues: Cystatin (141 aa).

An N-terminal signal peptide occupies residues 1 to 26 (MVHSQLPVAAPLRLLCALLLLPSATM). Residues 29–129 (GGLSPRSVTD…CHFQVWSRPW (101 aa)) form the Cystatin domain. The Secondary area of contact signature appears at 73 to 77 (QVVAG). Cystine bridges form between Cys91–Cys107 and Cys120–Cys140.

The protein belongs to the cystatin family. Expressed at a low level by the venom gland (at protein level).

It localises to the secreted. Inhibits various C1 cysteine proteases including cathepsin L, papain and cathepsin B. This protein has no toxic activity and its function in the venom is unknown. It may play a role as a housekeeping or regulatory protein. The sequence is that of Cystatin from Pseudonaja textilis (Eastern brown snake).